A 330-amino-acid chain; its full sequence is Short chain dehydrogenase macD (330 aa).

NADP(+) is bound by residues K57, D86, N113, Y204, and K208. The Proton donor role is filled by Y204. Residue K208 is the Lowers pKa of active site Tyr of the active site.

This sequence belongs to the short-chain dehydrogenases/reductases (SDR) family.

Its pathway is secondary metabolite biosynthesis; terpenoid biosynthesis. In terms of biological role, short chain dehydrogenase; part of the gene cluster that mediates the biosynthesis of macrophorins, isoprenoid epoxycyclohexenones containing cyclized drimane moieties. The first step of the pathway is the synthesis of 6-methylsalicylic acid (6-MSA) by the polyketide synthase macA. 6-MSA is then converted to m-cresol by the decarboxylase macB. The cytochrome P450 monooxygenase macC then catalyzes the oxidation of m-cresol to toluquinol. Epoxidation of toluquinol is then performed by the short chain dehydrogenase macD, with the help of macE, and a further prenylation by macG leads to 7-deacetoxyyanuthone A. The next step is the hydroxylation of C-22 of 7-deacetoxyyanuthone A by the cytochrome P450 monooxygenase macH to yield 22-deacetylyanuthone A. O-Mevalon transferase macI then attaches mevalon to the hydroxyl group of 22-deacetylyanuthone A to produce yanuthone E. The terpene cyclase macJ catalyzes the cyclization of 22-deacetylyanuthone A to macrophorin A. MacJ is also able to catalyze cyclization of yanuthone E and 7-deacetoxyyanuthone A to their corresponding macrophorins. The macJ products can be further modified by macH and macJ, as well as by the FAD-dependent monooxygenase macF, to produce additional macrophorins, including 4'-oxomacrophorin A, 4'-oxomacrophorin D and 4'-oxomacrophorin E. The chain is Short chain dehydrogenase macD from Penicillium terrestre.